Reading from the N-terminus, the 2323-residue chain is C2 domain-containing protein 3 (2323 aa).

Disordered regions lie at residues 1–27 (MKQR…SPST), 193–215 (RELR…SCRG), 402–426 (WNGL…DLND), 444–509 (SDVG…HTPA), 537–556 (PDSP…PPKP), and 698–745 (KLSS…TKKT). Positions 200 to 209 (ESSNTQSMIP) are enriched in polar residues. Ser-453 carries the post-translational modification Phosphoserine. Basic and acidic residues predominate over residues 474–483 (KVVESKEQKQ). Residues 504–663 (PGHTPAMSLS…IQSELLSFSS (160 aa)) enclose the C2 1 domain. A compositionally biased stretch (polar residues) spans 698-735 (KLSSSTQPAPVSAATSSDTILPETGQDTACTRNPQSSN). Residue Ser-713 is modified to Phosphoserine. C2 domains are found at residues 771-903 (SCNL…SRLL), 969-1131 (QPPV…YRED), 1155-1323 (SSGF…TGWY), and 1383-1517 (KEEE…TLTI). The span at 1550–1574 (EPARELDSMDCSSHSESEQHPRKSD) shows a compositional bias: basic and acidic residues. Disordered stretches follow at residues 1550-1599 (EPAR…NSAA) and 1798-1824 (LAHT…AARH). Residues 1584 to 1599 (LQTSPTSTQVHGNSAA) show a composition bias toward polar residues. Positions 1598–1726 (AAAQVCPAQE…SGFQFICGWY (129 aa)) constitute a C2 6 domain. Ser-1871 carries the post-translational modification Phosphoserine. 5 disordered regions span residues 1891-1918 (FSSQ…GRQD), 1952-2013 (ALTS…GGML), 2074-2163 (SEVL…SVGW), 2182-2231 (SEAF…EVST), and 2261-2323 (SHSP…TEET). Residues 1892–1904 (SSQSSPAVSQSQE) are compositionally biased toward low complexity. Composition is skewed to polar residues over residues 1952 to 1965 (ALTS…SRAV) and 2074 to 2083 (SEVLSPQPTE). Positions 2110–2125 (AVSPQPAQGSPSQSGV) are enriched in low complexity. Polar residues predominate over residues 2147–2158 (PSLTFSEAQEGS). Over residues 2182–2197 (SEAFSSEFSDSSESFE) the composition is skewed to low complexity. The segment covering 2207–2216 (SKREDYKDSP) has biased composition (basic and acidic residues). The span at 2222-2231 (QVPTGSEVST) shows a compositional bias: polar residues.

Interacts with OFD1; OFD1 may act as a negative regulator of C2CD3. Associates with the BBSome complex. Interacts with IFT88, BBS4 and PCM1.

It is found in the cytoplasm. The protein localises to the cytoskeleton. It localises to the cilium basal body. The protein resides in the microtubule organizing center. Its subcellular location is the centrosome. It is found in the centriole. In terms of biological role, component of the centrioles that acts as a positive regulator of centriole elongation. Promotes assembly of centriolar distal appendage, a structure at the distal end of the mother centriole that acts as an anchor of the cilium, and is required for recruitment of centriolar distal appendages proteins CEP83, SCLT1, CEP89, FBF1 and CEP164. Not required for centriolar satellite integrity or RAB8 activation. Required for primary cilium formation. Required for sonic hedgehog/SHH signaling and for proteolytic processing of GLI3. This chain is C2 domain-containing protein 3 (C2cd3), found in Mus musculus (Mouse).